Consider the following 94-residue polypeptide: Exodeoxyribonuclease 7 small subunit (94 aa).

It belongs to the XseB family. As to quaternary structure, heterooligomer composed of large and small subunits.

The protein resides in the cytoplasm. The catalysed reaction is Exonucleolytic cleavage in either 5'- to 3'- or 3'- to 5'-direction to yield nucleoside 5'-phosphates.. Bidirectionally degrades single-stranded DNA into large acid-insoluble oligonucleotides, which are then degraded further into small acid-soluble oligonucleotides. The protein is Exodeoxyribonuclease 7 small subunit of Trichormus variabilis (strain ATCC 29413 / PCC 7937) (Anabaena variabilis).